Consider the following 400-residue polypeptide: Na(+)/H(+) antiporter NhaA (400 aa).

Transmembrane regions (helical) follow at residues 9-29 (FLVSEASGGIFLIAAAVIAMV), 60-80 (LILWVNDGLMAIFFFVLGLEL), 96-116 (VLPAVGAIGGIVVPAFIFYLF), 127-147 (WAIPTATDTAFALGIIMILGA), 155-175 (IFLVTLAIIDDVCAILIMAIF), 180-200 (LSLISFGVAAIVILGLLALNL), 210-230 (LILGIILWISVLKSGVHATLA), 263-283 (YFVLPVFAFVNAGISLKGIGL), 294-314 (VILGLFLGKQIGVFGFCFVAI), 327-347 (WISFYGLCILTGIGFTMSLFI), and 366-386 (VLIASVISGVLGYIVLYIASV).

It belongs to the NhaA Na(+)/H(+) (TC 2.A.33) antiporter family.

The protein localises to the cell inner membrane. The enzyme catalyses Na(+)(in) + 2 H(+)(out) = Na(+)(out) + 2 H(+)(in). Na(+)/H(+) antiporter that extrudes sodium in exchange for external protons. This Campylobacter curvus (strain 525.92) protein is Na(+)/H(+) antiporter NhaA.